Reading from the N-terminus, the 120-residue chain is UPF0231 protein YacL (120 aa).

Belongs to the UPF0231 family.

This Escherichia coli (strain SMS-3-5 / SECEC) protein is UPF0231 protein YacL.